The following is a 212-amino-acid chain: Thymidylate kinase (212 aa).

Residue 10 to 17 participates in ATP binding; the sequence is GLEGAGKT.

It belongs to the thymidylate kinase family.

The catalysed reaction is dTMP + ATP = dTDP + ADP. Its function is as follows. Phosphorylation of dTMP to form dTDP in both de novo and salvage pathways of dTTP synthesis. This chain is Thymidylate kinase, found in Cronobacter sakazakii (strain ATCC BAA-894) (Enterobacter sakazakii).